The primary structure comprises 607 residues: DNA mismatch repair protein MutL (607 aa).

The interval Arg-374–Ala-411 is disordered. Residues Met-397 to Asp-407 show a composition bias toward acidic residues.

Belongs to the DNA mismatch repair MutL/HexB family.

Functionally, this protein is involved in the repair of mismatches in DNA. It is required for dam-dependent methyl-directed DNA mismatch repair. May act as a 'molecular matchmaker', a protein that promotes the formation of a stable complex between two or more DNA-binding proteins in an ATP-dependent manner without itself being part of a final effector complex. This Exiguobacterium sibiricum (strain DSM 17290 / CCUG 55495 / CIP 109462 / JCM 13490 / 255-15) protein is DNA mismatch repair protein MutL.